Here is a 422-residue protein sequence, read N- to C-terminus: 3-phosphoshikimate 1-carboxyvinyltransferase (422 aa).

K21, S22, and R26 together coordinate 3-phosphoshikimate. K21 is a binding site for phosphoenolpyruvate. Residues G93 and R121 each coordinate phosphoenolpyruvate. Residues S166, S167, Q168, S194, D310, and K337 each contribute to the 3-phosphoshikimate site. A phosphoenolpyruvate-binding site is contributed by Q168. D310 serves as the catalytic Proton acceptor. The phosphoenolpyruvate site is built by R341, R382, and K407.

Belongs to the EPSP synthase family. In terms of assembly, monomer.

The protein localises to the cytoplasm. The catalysed reaction is 3-phosphoshikimate + phosphoenolpyruvate = 5-O-(1-carboxyvinyl)-3-phosphoshikimate + phosphate. The protein operates within metabolic intermediate biosynthesis; chorismate biosynthesis. Functionally, catalyzes the transfer of the enolpyruvyl moiety of phosphoenolpyruvate (PEP) to the 5-hydroxyl of shikimate-3-phosphate (S3P) to produce enolpyruvyl shikimate-3-phosphate and inorganic phosphate. The protein is 3-phosphoshikimate 1-carboxyvinyltransferase of Methanoculleus marisnigri (strain ATCC 35101 / DSM 1498 / JR1).